A 208-amino-acid polypeptide reads, in one-letter code: Anti-sigma-W factor RsiW (208 aa).

Residues 1–87 (MSCPEQIVQL…ASVKRWFRTH (87 aa)) lie on the Cytoplasmic side of the membrane. Zn(2+) is bound by residues Cys3, His30, Cys34, and Cys37. The chain crosses the membrane as a helical span at residues 88–108 (PVIAAAAVFIILMGGGFFNSW). The Extracellular portion of the chain corresponds to 109-208 (HNDHNFSVSK…LDAFNPNGEE (100 aa)).

This sequence belongs to the zinc-associated anti-sigma factor (ZAS) superfamily. Anti-sigma-W factor family. Forms a heterodimer with cognate sigma factor SigW, which probably prevents SigW from binding to DNA. The cofactor is Zn(2+). Post-translationally, is processed by successive proteolytic events. First, the extracellular region of RsiW is cleaved by PrsW (site-1 cleavage) in response to cell envelope stresses. In a reconstituted E.coli system PrsW cuts between Ala-168 and Ser-169 followed by trimming by E.coli Tsp; the endogenous extracellular exopeptidase responsible for the event in B.subtilis has not been identified. Next, it undergoes cleavage at an intramembrane site (site-2 cleavage) mediated by RasP. This cleavage uncovers a cryptic proteolytic tag with conserved alanine residues in the transmembrane segment, that is recognized mainly by the ClpXP protease, which completely degrades the protein in the cytoplasm and leads to the induction of the sigma-W-controlled genes.

The protein localises to the cell membrane. Functionally, the anti-sigma factor for extracytoplasmic function (ECF) sigma factor sigma-W (SigW). Holds SigW, its cognate ECF sigma factor, in an inactive form until released by regulated intramembrane proteolysis (RIP). SigW and RsiW mediate cell response to cell wall stress. RIP occurs when an extracytoplasmic signal triggers a concerted proteolytic cascade to transmit information and elicit cellular responses. The membrane-spanning regulatory substrate protein is first cut periplasmically (site-1 protease, S1P, PrsW), then within the membrane itself (site-2 protease, S2P, RasP), while cytoplasmic proteases finish degrading the anti-sigma factor, liberating sigma-W. This chain is Anti-sigma-W factor RsiW (rsiW), found in Bacillus subtilis (strain 168).